We begin with the raw amino-acid sequence, 152 residues long: S-protein homolog 4 (152 aa).

The N-terminal stretch at 1–23 (MTTMLKTQVHVVVIYLLIQIAFS) is a signal peptide. Asn-71 carries N-linked (GlcNAc...) asparagine glycosylation.

Belongs to the plant self-incompatibility (S1) protein family.

Its subcellular location is the secreted. The protein is S-protein homolog 4 of Arabidopsis thaliana (Mouse-ear cress).